We begin with the raw amino-acid sequence, 541 residues long: Formimidoyltransferase-cyclodeaminase (541 aa).

Residues 1–181 (MSQLVECVPN…GATVAGARKF (181 aa)) form a formiminotransferase N-subdomain region. H82 acts as the For formimidoyltransferase activity in catalysis. 163-172 (GPSAFVPSWG) serves as a coordination point for folate. Positions 182-326 (LLAFNINLLS…PKERIIEYLV (145 aa)) are formiminotransferase C-subdomain. The segment at 327–334 (PEAGPEQS) is linker. Positions 335-541 (LLHKPLRTFV…VLDRLEARQA (207 aa)) are cyclodeaminase/cyclohydrolase. D412 functions as the For cyclodeaminase activity in the catalytic mechanism. S520 is modified (phosphoserine).

This sequence in the C-terminal section; belongs to the cyclodeaminase/cyclohydrolase family. In the N-terminal section; belongs to the formiminotransferase family. As to quaternary structure, homooctamer, including four polyglutamate binding sites. The subunits are arranged as a tetramer of dimers, and form a planar ring-shaped structure.

The protein localises to the cytoplasm. It is found in the cytosol. Its subcellular location is the golgi apparatus. It localises to the cytoskeleton. The protein resides in the microtubule organizing center. The protein localises to the centrosome. It is found in the centriole. The catalysed reaction is 5-formimidoyltetrahydrofolate + L-glutamate = N-formimidoyl-L-glutamate + (6S)-5,6,7,8-tetrahydrofolate. It catalyses the reaction 5-formimidoyltetrahydrofolate + 2 H(+) = (6R)-5,10-methenyltetrahydrofolate + NH4(+). It participates in amino-acid degradation; L-histidine degradation into L-glutamate; L-glutamate from N-formimidoyl-L-glutamate (transferase route): step 1/1. In terms of biological role, folate-dependent enzyme, that displays both transferase and deaminase activity. Serves to channel one-carbon units from formiminoglutamate to the folate pool. Its function is as follows. Binds and promotes bundling of vimentin filaments originating from the Golgi. The chain is Formimidoyltransferase-cyclodeaminase (FTCD) from Sus scrofa (Pig).